The chain runs to 247 residues: 14-3-3 protein gamma-1 (247 aa).

This sequence belongs to the 14-3-3 family. Homodimer, and heterodimer with other family members.

The protein resides in the cytoplasm. In terms of biological role, adapter protein implicated in the regulation of a large spectrum of both general and specialized signaling pathways. Binds to a large number of partners, usually by recognition of a phosphoserine or phosphothreonine motif. Binding generally results in the modulation of the activity of the binding partner. The sequence is that of 14-3-3 protein gamma-1 (ywhag1) from Danio rerio (Zebrafish).